The chain runs to 474 residues: UDP-N-acetylmuramate--L-alanine ligase (474 aa).

Position 108-114 (108-114 (GTHGKTT)) interacts with ATP.

The protein belongs to the MurCDEF family.

The protein localises to the cytoplasm. The enzyme catalyses UDP-N-acetyl-alpha-D-muramate + L-alanine + ATP = UDP-N-acetyl-alpha-D-muramoyl-L-alanine + ADP + phosphate + H(+). Its pathway is cell wall biogenesis; peptidoglycan biosynthesis. Functionally, cell wall formation. The polypeptide is UDP-N-acetylmuramate--L-alanine ligase (Chloroflexus aggregans (strain MD-66 / DSM 9485)).